Consider the following 458-residue polypeptide: MSTGTVVQVIGAVVDVEFPHDAVPQIYDALEIKSEGLVLEVQQQLGGGVVRTIAMGTSDGLRRGLEVVNSGSPISVPVGSATLGRIMNVLGDPIDECGEIGEQERYVIHREAPSYEDQSSSTELLETGIKVIDLVCPFAKGGKVGLFGGAGVGKTVNMMELINNIAKAHSGLSVFAGVGERTREGNDFYYEMKDSGVLDKVAMVYGQMNEPPGNRLRVALTGLTMAEKFRDEGKDVLFFVDNIYRYTLAGTEVSALLGRMPSAVGYQPTLAEEMGVLQERITSTKTGSITSVQAVYVPADDLTDPSPATTFAHLDATVVLSRNIASMGIYPAVDPLDSTSRQLDPLVVGQEHYDVASGVQTVLQRYKELKDIIAILGMDELSDEDKTTVARARKIEKYLSQPFFVAEVFTGSPGKYVSLKDTIRGFKGILEGEFDHLPEQAFYMVGSIDEAVEKANKK.

148 to 155 (GGAGVGKT) is a binding site for ATP.

This sequence belongs to the ATPase alpha/beta chains family. F-type ATPases have 2 components, CF(1) - the catalytic core - and CF(0) - the membrane proton channel. CF(1) has five subunits: alpha(3), beta(3), gamma(1), delta(1), epsilon(1). CF(0) has three main subunits: a(1), b(2) and c(9-12). The alpha and beta chains form an alternating ring which encloses part of the gamma chain. CF(1) is attached to CF(0) by a central stalk formed by the gamma and epsilon chains, while a peripheral stalk is formed by the delta and b chains.

The protein localises to the cell inner membrane. The enzyme catalyses ATP + H2O + 4 H(+)(in) = ADP + phosphate + 5 H(+)(out). Produces ATP from ADP in the presence of a proton gradient across the membrane. The catalytic sites are hosted primarily by the beta subunits. The sequence is that of ATP synthase subunit beta from Shewanella halifaxensis (strain HAW-EB4).